Consider the following 240-residue polypeptide: Sugar fermentation stimulation protein homolog (240 aa).

This sequence belongs to the SfsA family.

The protein is Sugar fermentation stimulation protein homolog of Saccharolobus islandicus (strain M.14.25 / Kamchatka #1) (Sulfolobus islandicus).